The following is an 880-amino-acid chain: Alanine--tRNA ligase (880 aa).

Zn(2+)-binding residues include H566, H570, C668, and H672.

It belongs to the class-II aminoacyl-tRNA synthetase family. The cofactor is Zn(2+).

Its subcellular location is the cytoplasm. It catalyses the reaction tRNA(Ala) + L-alanine + ATP = L-alanyl-tRNA(Ala) + AMP + diphosphate. In terms of biological role, catalyzes the attachment of alanine to tRNA(Ala) in a two-step reaction: alanine is first activated by ATP to form Ala-AMP and then transferred to the acceptor end of tRNA(Ala). Also edits incorrectly charged Ser-tRNA(Ala) and Gly-tRNA(Ala) via its editing domain. The protein is Alanine--tRNA ligase of Trichormus variabilis (strain ATCC 29413 / PCC 7937) (Anabaena variabilis).